Here is a 152-residue protein sequence, read N- to C-terminus: 2-C-methyl-D-erythritol 2,4-cyclodiphosphate synthase (152 aa).

A divalent metal cation-binding residues include aspartate 8 and histidine 10. 4-CDP-2-C-methyl-D-erythritol 2-phosphate-binding positions include 8-10 (DSH) and 34-35 (HS). A divalent metal cation is bound at residue histidine 42. Residues 56-58 (DIG) and 61-65 (FPDTD) each bind 4-CDP-2-C-methyl-D-erythritol 2-phosphate.

The protein belongs to the IspF family. Homotrimer. The cofactor is a divalent metal cation.

The catalysed reaction is 4-CDP-2-C-methyl-D-erythritol 2-phosphate = 2-C-methyl-D-erythritol 2,4-cyclic diphosphate + CMP. The protein operates within isoprenoid biosynthesis; isopentenyl diphosphate biosynthesis via DXP pathway; isopentenyl diphosphate from 1-deoxy-D-xylulose 5-phosphate: step 4/6. Involved in the biosynthesis of isopentenyl diphosphate (IPP) and dimethylallyl diphosphate (DMAPP), two major building blocks of isoprenoid compounds. Catalyzes the conversion of 4-diphosphocytidyl-2-C-methyl-D-erythritol 2-phosphate (CDP-ME2P) to 2-C-methyl-D-erythritol 2,4-cyclodiphosphate (ME-CPP) with a corresponding release of cytidine 5-monophosphate (CMP). This chain is 2-C-methyl-D-erythritol 2,4-cyclodiphosphate synthase, found in Thermus thermophilus (strain ATCC BAA-163 / DSM 7039 / HB27).